The chain runs to 171 residues: Adenine phosphoribosyltransferase (171 aa).

It belongs to the purine/pyrimidine phosphoribosyltransferase family. As to quaternary structure, homodimer.

Its subcellular location is the cytoplasm. The catalysed reaction is AMP + diphosphate = 5-phospho-alpha-D-ribose 1-diphosphate + adenine. Its pathway is purine metabolism; AMP biosynthesis via salvage pathway; AMP from adenine: step 1/1. Functionally, catalyzes a salvage reaction resulting in the formation of AMP, that is energically less costly than de novo synthesis. The polypeptide is Adenine phosphoribosyltransferase (Geobacter metallireducens (strain ATCC 53774 / DSM 7210 / GS-15)).